The sequence spans 61 residues: Antimicrobial peptide 1 (61 aa).

Residues 1–24 form the signal peptide; sequence LPVAFLKFAIVLILFIAMSAMIEA. At Gln-25 the chain carries Pyrrolidone carboxylic acid. Intrachain disulfides connect Cys-26–Cys-43, Cys-33–Cys-47, and Cys-42–Cys-58.

It belongs to the AMP family. Homodimer. Three disulfide bonds are present. In terms of tissue distribution, found only in seeds.

The protein localises to the secreted. Functionally, possesses antifungal activity and is also active on two tested Gram-positive bacteria but is non-toxic for Gram-negative bacteria and cultured human cells. This chain is Antimicrobial peptide 1 (AMP1), found in Mirabilis jalapa (Garden four-o'clock).